Here is a 302-residue protein sequence, read N- to C-terminus: MWFKNLQLYRFTRPFEHDADSLEKMLQSHLFSPCGSQEMSKFGWISPLGKHAEVLVHEAQGQMLLCAKKEEKVLPAAVIKDMLQEKIDEMEAAQGRALKKKEKESLKEEILHTLLPRAFPRSSQTFLWINPAENYLVVDAGSAKKADDVLSLLRKCTGSLPVVPFALQNPPEITMTEWLNAGAAPGGFVLEDEAELRSALEHGGIIRCKEQDLVTEEIKAHLLADKMVTKLALNWSDTVSFVLADDLSIKRLKFSEELREQNEDVISEDHVARMDADFALMTGELAKFVPELVAALGGEKAE.

It belongs to the RdgC family.

The protein resides in the cytoplasm. The protein localises to the nucleoid. Its function is as follows. May be involved in recombination. This is Recombination-associated protein RdgC from Tolumonas auensis (strain DSM 9187 / NBRC 110442 / TA 4).